The following is a 237-amino-acid chain: Lectin (237 aa).

Residues glutamate 8 and aspartate 10 each contribute to the Mn(2+) site. Positions 10, 12, 14, and 19 each coordinate Ca(2+). A carbohydrate-binding residues include tyrosine 12 and asparagine 14. Mn(2+) is bound by residues aspartate 19 and histidine 24. Residue 98–100 (GLY) coordinates a carbohydrate. Aspartate 208 is a Ca(2+) binding site. The a carbohydrate site is built by glycine 227 and arginine 228.

The protein belongs to the leguminous lectin family. As to quaternary structure, homotetramer; dimer of dimers. In terms of processing, concanavalin A-like lectins of the Diocleinae subtribe undergo proteolytic processing referred to as circular permutation. The propeptide is split into an N-terminal and a C-terminal part, the gamma and beta chain, respectively. These are then religated in beta-gamma order to form the mature alpha chain. The beta and gamma chains can often be detected in cell extracts. Residues 1-118 of the mature chain, as displayed here, probably constitute the beta chain in the propeptide, residues 119-237 the gamma chain.

D-mannose/D-glucose-binding lectin with hemagglutinating activity towards rabbit and human erythrocytes. In rats, induces dose-dependent paw edema. Has low cytotoxicity against Artemisia sp. The chain is Lectin from Macropsychanthus comosus (Sea purse).